The following is a 106-amino-acid chain: L-rhamnose mutarotase (106 aa).

A substrate-binding site is contributed by tyrosine 20. The Proton donor role is filled by histidine 24. Residues tyrosine 43 and 78–79 (WW) contribute to the substrate site.

This sequence belongs to the rhamnose mutarotase family. Homodimer.

It localises to the cytoplasm. It catalyses the reaction alpha-L-rhamnose = beta-L-rhamnose. The protein operates within carbohydrate metabolism; L-rhamnose metabolism. Involved in the anomeric conversion of L-rhamnose. The sequence is that of L-rhamnose mutarotase from Rhizobium johnstonii (strain DSM 114642 / LMG 32736 / 3841) (Rhizobium leguminosarum bv. viciae).